A 1401-amino-acid polypeptide reads, in one-letter code: MGLEHTFYPAEDRFEPLLEHSEPVNFVPKENAKSYVRQGFASPHQSLMDNLVDSTESTKRSENFVSHIPLTPSHSGQSEKLMSTRTSHSPYISPTMSYTNHSPANLTRNSSFNHQHYSTTLRSPPSMRGRGIDVNSSHYPHISRPRTSSDSQKMYTRAPVDYYYIQENPYFNNIDQDSISDKSLPSTNQSLHHSEEDTESDNDFSESIHPEFDIDVFYKVSNILYDESDLQDPEKRERLEWHSMLSSVLKGDVMQTEKRRLRLTEPDGHSGTYISEVWLGLQAWLHGRLNADQAEVIRKSREGVEPVLREVIDFQIQDEETTKPPLEQVTEILEKVEQCKQFYISSREMEENVPLSASKEFNYKLNALISWSNVMESIQVETLVLQKWVGNDEFDLTMRTPQFNYDGVENTSSFVERIFRQSGLQRTFEQRTLTTLNRIIHQAKQTISENAQAFEEMKLPTYEDKLLPLVRFPIKLLEEALRLRLAYAKKIKGPNFLIVDSMLDDFKIALSVAVRIKREYIKIASPSPGWSLPTNVDEDYDNVLLDSLKFYFKLLTLKLSSGNKNLYFKEIDFLENEWAFLNEHIYWINGGDIHMAGQFSYLSNSLLLNVHRYVESHLNGPTERTAASLTNWYSTLLKNTQIRFRKILRFSETLNSRFENASDFVISEGHLPDLVNRLSTTGHFLAYTANLERDGVFVIADHTLSENPEALKALLFSKDISNLETIQQNCSYVLILCPVHPIVWKGRIEKVDVPDFSVDLKTNRVRIIASNKREHLQAAKSVFQSISGDLVTLAVECRSSITRVYKEFIRLSKLCMRISSTVVDCVSAVREACSGVNCHDLIYHVFSFAAEFGQRILRFLSFDSYWQTKLKRKITSLAVEWISFICDECDLMDRKTFRWGVGALEFLMLMIRGNNILLIDDAMFLKIREKVGKSMAFLLTHFDVLGAKSKVAAKLQRESTEVSSSPRLTSFGDVEEEALSIQLLQKETMLRIDELEIERNNTLLERLAIGHVLDDSVFRNRDFIKLASSFSNITIRWQQGHFVRSGMFGDVYTGVNMETGDLLAVKEIKLQDSRTFRSTVDQIHNEMTVLERLNHPNVVTYYGVEVHREKVYIFMEFCQGGSLADLLAHGRIEDENVLKVYVVQLLEGLAYIHSQHILHRDIKPANILLDHRGMIKYSDFGSALYVSPPTDPEVRYEDIQPELQHLAGTPMYMAPEIILGTKKGDFGAMDIWSLGCVILEMMTGSTPWSEMDNEWAIMYHVAAMHTPSIPQNEKISSLARDFIEQCFERDPEQRPRAVDLLTHPWITDFRKKTIITMPPATITKKTSLSHTITEEKTAQLLAGRHDDSKAETDSLAASYKEESALPVASNVGLRQPNELRIDSINLPPAIVTPDTINYSVD.

Disordered regions lie at residues 67–99 (HIPLTPSHSGQSEKLMSTRTSHSPYISPTMSYT) and 176–205 (QDSISDKSLPSTNQSLHHSEEDTESDNDFS). 2 stretches are compositionally biased toward polar residues: residues 72–99 (PSHSGQSEKLMSTRTSHSPYISPTMSYT) and 176–191 (QDSISDKSLPSTNQSL). Positions 1037-1306 (WQQGHFVRSG…AVDLLTHPWI (270 aa)) constitute a Protein kinase domain. ATP is bound by residues 1043–1051 (VRSGMFGDV) and lysine 1066. The active-site Proton acceptor is the aspartate 1161.

This sequence belongs to the protein kinase superfamily. STE Ser/Thr protein kinase family. MAP kinase kinase kinase subfamily.

It catalyses the reaction L-seryl-[protein] + ATP = O-phospho-L-seryl-[protein] + ADP + H(+). It carries out the reaction L-threonyl-[protein] + ATP = O-phospho-L-threonyl-[protein] + ADP + H(+). Involved in a signal transduction pathway that is activated in under conditions of heat shock, oxidative stress or limited nutrition. Unlike win1, it is not activated by changes in the osmolarity of the extracellular environment. Activates the wis1 MAP kinase kinase by phosphorylation. The polypeptide is MAP kinase kinase kinase wis4 (wis4) (Schizosaccharomyces pombe (strain 972 / ATCC 24843) (Fission yeast)).